The primary structure comprises 480 residues: Aromatic-L-amino-acid decarboxylase (480 aa).

At Met1 the chain carries N-acetylmethionine. Tandem repeats lie at residues 58 to 115 and 118 to 178. Positions 58–178 are 2 X approximate tandem repeats; that stretch reads GDIERIIMPG…AASPELTQAA (121 aa). Position 82 (Thr82) interacts with substrate. Pyridoxal 5'-phosphate contacts are provided by Ala148 and Ser149. Substrate is bound at residue His192. Thr246 and Asn300 together coordinate pyridoxal 5'-phosphate. At Lys303 the chain carries N6-(pyridoxal phosphate)lysine.

Belongs to the group II decarboxylase family. In terms of assembly, homodimer. Requires pyridoxal 5'-phosphate as cofactor.

It catalyses the reaction L-dopa + H(+) = dopamine + CO2. The enzyme catalyses 5-hydroxy-L-tryptophan + H(+) = serotonin + CO2. It participates in catecholamine biosynthesis; dopamine biosynthesis; dopamine from L-tyrosine: step 2/2. Its function is as follows. Catalyzes the decarboxylation of L-3,4-dihydroxyphenylalanine (DOPA) to dopamine and L-5-hydroxytryptophan to serotonin. The chain is Aromatic-L-amino-acid decarboxylase (DDC) from Cavia porcellus (Guinea pig).